Reading from the N-terminus, the 420-residue chain is Tryptophan synthase beta chain (420 aa).

K100 is subject to N6-(pyridoxal phosphate)lysine.

The protein belongs to the TrpB family. Tetramer of two alpha and two beta chains. It depends on pyridoxal 5'-phosphate as a cofactor.

The enzyme catalyses (1S,2R)-1-C-(indol-3-yl)glycerol 3-phosphate + L-serine = D-glyceraldehyde 3-phosphate + L-tryptophan + H2O. It functions in the pathway amino-acid biosynthesis; L-tryptophan biosynthesis; L-tryptophan from chorismate: step 5/5. Its function is as follows. The beta subunit is responsible for the synthesis of L-tryptophan from indole and L-serine. The protein is Tryptophan synthase beta chain of Pyrobaculum islandicum (strain DSM 4184 / JCM 9189 / GEO3).